A 250-amino-acid chain; its full sequence is Bacteriorhodopsin-I (250 aa).

7 helical membrane passes run 7 to 27 (EGIW…YFIA), 42 to 62 (IATI…ALGF), 81 to 101 (YTDW…LAGA), 114 to 134 (VLMI…VLSA), 139 to 159 (LVWW…LFSS), 185 to 205 (VWLV…LVGI), and 207 to 227 (IETA…GIIL). Lys-220 carries the post-translational modification N6-(retinylidene)lysine.

It belongs to the archaeal/bacterial/fungal opsin family. The covalent binding of retinal to the apoprotein, bacterioopsin, generates bacteriorhodopsin.

Its subcellular location is the membrane. Functionally, light-driven proton pump. This chain is Bacteriorhodopsin-I (bop), found in Haloarcula marismortui (strain ATCC 43049 / DSM 3752 / JCM 8966 / VKM B-1809) (Halobacterium marismortui).